The chain runs to 434 residues: ATP-dependent RNA helicase SUB2 (434 aa).

Residues M1–N16 show a composition bias toward acidic residues. The segment at M1–A32 is disordered. A Q motif motif is present at residues T50 to Q78. In terms of domain architecture, Helicase ATP-binding spans I81–H256. Position 94–101 (A94–T101) interacts with ATP. The DEAD box motif lies at D203–D206. The Helicase C-terminal domain maps to G268–S429.

It belongs to the DEAD box helicase family. DECD subfamily.

It localises to the nucleus. It carries out the reaction ATP + H2O = ADP + phosphate + H(+). ATP-binding RNA helicase involved in transcription elongation and required for the export of mRNA out of the nucleus. SUB2 also plays a role in pre-mRNA splicing and spliceosome assembly. May be involved in rDNA and telomeric silencing, and maintenance of genome integrity. In Chaetomium globosum (strain ATCC 6205 / CBS 148.51 / DSM 1962 / NBRC 6347 / NRRL 1970) (Soil fungus), this protein is ATP-dependent RNA helicase SUB2 (SUB2).